Here is a 528-residue protein sequence, read N- to C-terminus: Bifunctional purine biosynthesis protein PurH (528 aa).

An MGS-like domain is found at 2–149 (TDLAPLRRAL…KNHGFVSVVV (148 aa)).

It belongs to the PurH family.

It catalyses the reaction (6R)-10-formyltetrahydrofolate + 5-amino-1-(5-phospho-beta-D-ribosyl)imidazole-4-carboxamide = 5-formamido-1-(5-phospho-D-ribosyl)imidazole-4-carboxamide + (6S)-5,6,7,8-tetrahydrofolate. The enzyme catalyses IMP + H2O = 5-formamido-1-(5-phospho-D-ribosyl)imidazole-4-carboxamide. It functions in the pathway purine metabolism; IMP biosynthesis via de novo pathway; 5-formamido-1-(5-phospho-D-ribosyl)imidazole-4-carboxamide from 5-amino-1-(5-phospho-D-ribosyl)imidazole-4-carboxamide (10-formyl THF route): step 1/1. It participates in purine metabolism; IMP biosynthesis via de novo pathway; IMP from 5-formamido-1-(5-phospho-D-ribosyl)imidazole-4-carboxamide: step 1/1. The sequence is that of Bifunctional purine biosynthesis protein PurH from Roseobacter denitrificans (strain ATCC 33942 / OCh 114) (Erythrobacter sp. (strain OCh 114)).